We begin with the raw amino-acid sequence, 269 residues long: Phosphonates import ATP-binding protein PhnC (269 aa).

The ABC transporter domain occupies 8-251 (IHLYGASLRH…LLDALYANEQ (244 aa)). 40–47 (GPSGAGKS) serves as a coordination point for ATP.

The protein belongs to the ABC transporter superfamily. Phosphonates importer (TC 3.A.1.9.1) family. In terms of assembly, the complex is composed of two ATP-binding proteins (PhnC), two transmembrane proteins (PhnE) and a solute-binding protein (PhnD).

It localises to the cell inner membrane. It carries out the reaction phosphonate(out) + ATP + H2O = phosphonate(in) + ADP + phosphate + H(+). In terms of biological role, part of the ABC transporter complex PhnCDE involved in phosphonates import. Responsible for energy coupling to the transport system. The sequence is that of Phosphonates import ATP-binding protein PhnC from Pseudomonas putida (strain ATCC 47054 / DSM 6125 / CFBP 8728 / NCIMB 11950 / KT2440).